Reading from the N-terminus, the 126-residue chain is Large ribosomal subunit protein bL19 (126 aa).

This sequence belongs to the bacterial ribosomal protein bL19 family.

In terms of biological role, this protein is located at the 30S-50S ribosomal subunit interface and may play a role in the structure and function of the aminoacyl-tRNA binding site. This chain is Large ribosomal subunit protein bL19, found in Nitrobacter winogradskyi (strain ATCC 25391 / DSM 10237 / CIP 104748 / NCIMB 11846 / Nb-255).